A 347-amino-acid chain; its full sequence is Probable dual-specificity RNA methyltransferase RlmN (347 aa).

Catalysis depends on Glu-90, which acts as the Proton acceptor. The Radical SAM core domain occupies 96–326 (YKHGNSICIS…VTVRREMGSD (231 aa)). Cys-103 and Cys-331 are joined by a disulfide. [4Fe-4S] cluster-binding residues include Cys-110, Cys-114, and Cys-117. S-adenosyl-L-methionine contacts are provided by residues 157–158 (GE), Ser-189, 212–214 (SLH), and Asn-288. The active-site S-methylcysteine intermediate is Cys-331.

It belongs to the radical SAM superfamily. RlmN family. It depends on [4Fe-4S] cluster as a cofactor.

The protein localises to the cytoplasm. The catalysed reaction is adenosine(2503) in 23S rRNA + 2 reduced [2Fe-2S]-[ferredoxin] + 2 S-adenosyl-L-methionine = 2-methyladenosine(2503) in 23S rRNA + 5'-deoxyadenosine + L-methionine + 2 oxidized [2Fe-2S]-[ferredoxin] + S-adenosyl-L-homocysteine. The enzyme catalyses adenosine(37) in tRNA + 2 reduced [2Fe-2S]-[ferredoxin] + 2 S-adenosyl-L-methionine = 2-methyladenosine(37) in tRNA + 5'-deoxyadenosine + L-methionine + 2 oxidized [2Fe-2S]-[ferredoxin] + S-adenosyl-L-homocysteine. Specifically methylates position 2 of adenine 2503 in 23S rRNA and position 2 of adenine 37 in tRNAs. The sequence is that of Probable dual-specificity RNA methyltransferase RlmN from Clostridium botulinum (strain Eklund 17B / Type B).